The sequence spans 179 residues: ATP synthase subunit delta (179 aa).

Belongs to the ATPase delta chain family. F-type ATPases have 2 components, F(1) - the catalytic core - and F(0) - the membrane proton channel. F(1) has five subunits: alpha(3), beta(3), gamma(1), delta(1), epsilon(1). F(0) has three main subunits: a(1), b(2) and c(10-14). The alpha and beta chains form an alternating ring which encloses part of the gamma chain. F(1) is attached to F(0) by a central stalk formed by the gamma and epsilon chains, while a peripheral stalk is formed by the delta and b chains.

It localises to the cell membrane. F(1)F(0) ATP synthase produces ATP from ADP in the presence of a proton or sodium gradient. F-type ATPases consist of two structural domains, F(1) containing the extramembraneous catalytic core and F(0) containing the membrane proton channel, linked together by a central stalk and a peripheral stalk. During catalysis, ATP synthesis in the catalytic domain of F(1) is coupled via a rotary mechanism of the central stalk subunits to proton translocation. In terms of biological role, this protein is part of the stalk that links CF(0) to CF(1). It either transmits conformational changes from CF(0) to CF(1) or is implicated in proton conduction. The protein is ATP synthase subunit delta of Clostridium botulinum (strain 657 / Type Ba4).